Reading from the N-terminus, the 481-residue chain is Ammonium transporter 2 member 3 (481 aa).

Over Met-1–Thr-36 the chain is Extracellular. N-linked (GlcNAc...) asparagine glycosylation is present at Asn-4. Residues Ala-37–Val-57 traverse the membrane as a helical segment. Residues Lys-58–Ala-62 lie on the Cytoplasmic side of the membrane. A helical membrane pass occupies residues Val-63–Trp-83. Topologically, residues Ala-84–Asp-123 are extracellular. A helical membrane pass occupies residues Phe-124–Leu-144. The Cytoplasmic segment spans residues Gly-145–Ala-151. A helical membrane pass occupies residues Trp-152 to Trp-172. Topologically, residues Gly-173–Tyr-184 are extracellular. Residues Ala-185–Val-205 traverse the membrane as a helical segment. The Cytoplasmic portion of the chain corresponds to Gly-206 to Asn-220. The helical transmembrane segment at Ile-221–Gly-241 threads the bilayer. The Extracellular segment spans residues Ala-242 to Glu-248. The chain crosses the membrane as a helical span at residues Ile-249 to Ile-269. The Cytoplasmic segment spans residues Ser-270–Leu-281. Residues Ile-282–Val-302 form a helical membrane-spanning segment. Residues Asp-303–Pro-304 lie on the Extracellular side of the membrane. The chain crosses the membrane as a helical span at residues Trp-305 to Leu-325. The Cytoplasmic portion of the chain corresponds to His-326–Thr-338. The helical transmembrane segment at Leu-339–Phe-359 threads the bilayer. Residues Ala-360–Lys-363 lie on the Extracellular side of the membrane. The helical transmembrane segment at Leu-364–Phe-381 threads the bilayer. Topologically, residues Asp-382–Gln-395 are cytoplasmic. The chain crosses the membrane as a helical span at residues Leu-396–Leu-416. Topologically, residues Leu-417 to Glu-481 are extracellular.

This sequence belongs to the ammonia transporter channel (TC 1.A.11.2) family. As to expression, mostly expressed in mycorrhizal roots. Also observed in the cortex and endodermis of non-mycorrhizal roots.

It is found in the cell membrane. Its function is as follows. Involved in ammonium transport. Required for arbuscular mycorrhizal (AM) symbiosis with AM fungi (e.g. Glomus versiforme and G.intraradices) in low nitrogen conditions. The protein is Ammonium transporter 2 member 3 of Medicago truncatula (Barrel medic).